A 104-amino-acid polypeptide reads, in one-letter code: L-rhamnose mutarotase (104 aa).

Tyr-18 lines the substrate pocket. His-22 (proton donor) is an active-site residue. Substrate is bound by residues Tyr-41 and 76-77 (WW).

The protein belongs to the rhamnose mutarotase family. Homodimer.

It localises to the cytoplasm. It catalyses the reaction alpha-L-rhamnose = beta-L-rhamnose. It participates in carbohydrate metabolism; L-rhamnose metabolism. Involved in the anomeric conversion of L-rhamnose. This chain is L-rhamnose mutarotase, found in Clostridium beijerinckii (strain ATCC 51743 / NCIMB 8052) (Clostridium acetobutylicum).